We begin with the raw amino-acid sequence, 651 residues long: Probable potassium transport system protein Kup (651 aa).

The next 12 helical transmembrane spans lie at 41–61, 82–102, 130–150, 163–183, 194–214, 235–255, 276–296, 309–329, 366–386, 395–415, 426–446, and 450–470; these read LVLG…IYAF, VVSF…VLFV, LILG…VITP, IVAP…LVTL, VAIV…ASGL, FLTV…LAMT, WLWI…AFIL, MIPS…TVIA, IYIP…VLGF, AYGI…YIVM, ALPI…ANII, and EGGW…WTWV.

This sequence belongs to the HAK/KUP transporter (TC 2.A.72) family.

It localises to the cell inner membrane. It carries out the reaction K(+)(in) + H(+)(in) = K(+)(out) + H(+)(out). Its function is as follows. Transport of potassium into the cell. Likely operates as a K(+):H(+) symporter. The polypeptide is Probable potassium transport system protein Kup (Brucella ovis (strain ATCC 25840 / 63/290 / NCTC 10512)).